The sequence spans 86 residues: Electron transfer flavoprotein regulatory factor 1 (86 aa).

The protein belongs to the complex I LYR family.

Its subcellular location is the mitochondrion. Acts as a regulator of the electron transfer flavoprotein by promoting the removal of flavin from the ETF holoenzyme (composed of ETFA and ETFB). This chain is Electron transfer flavoprotein regulatory factor 1, found in Taeniopygia guttata (Zebra finch).